Here is a 298-residue protein sequence, read N- to C-terminus: tRNA-uridine aminocarboxypropyltransferase 2 (298 aa).

At M1 the chain carries N-acetylmethionine. Residues 1–10 show a composition bias toward basic and acidic residues; the sequence is MEPQAEERTL. The disordered stretch occupies residues 1–55; sequence MEPQAEERTLGEPAPPPSGALASPTPDEEERTEGGAPPTATPAGASGDSTSADGL. A compositionally biased stretch (low complexity) spans 34–45; sequence GGAPPTATPAGA. S132 bears the Phosphoserine mark. The short motif at 178–181 is the DXTW element; the sequence is DGTW.

It belongs to the TDD superfamily. DTWD2 family.

The protein localises to the nucleus. It localises to the cytoplasm. The enzyme catalyses a uridine in tRNA + S-adenosyl-L-methionine = a 3-[(3S)-3-amino-3-carboxypropyl]uridine in tRNA + S-methyl-5'-thioadenosine + H(+). In terms of biological role, catalyzes the formation of 3-(3-amino-3-carboxypropyl)uridine (acp3U) at position 20a in the D-loop of several cytoplasmic tRNAs (acp3U(20a)). Also has a weak activity to form acp3U at position 20 in the D-loop of tRNAs (acp3U(20)). Involved in glycoRNA biosynthesis by mediating formation of acp3U, which acts as an attachment site for N-glycans on tRNAs. GlycoRNAs consist of RNAs modified with secretory N-glycans that are presented on the cell surface. This is tRNA-uridine aminocarboxypropyltransferase 2 from Mus musculus (Mouse).